A 351-amino-acid polypeptide reads, in one-letter code: 7,8-didemethyl-8-hydroxy-5-deazariboflavin synthase (351 aa).

A Radical SAM core domain is found at 35 to 275 (ITYSKNAFIP…EDISIQVPPN (241 aa)). The [4Fe-4S] cluster site is built by Cys49, Cys53, and Cys56.

This sequence belongs to the radical SAM superfamily. CofG family. In terms of assembly, consists of two subunits, CofG and CofH. Requires [4Fe-4S] cluster as cofactor.

It carries out the reaction 5-amino-5-(4-hydroxybenzyl)-6-(D-ribitylimino)-5,6-dihydrouracil + S-adenosyl-L-methionine = 7,8-didemethyl-8-hydroxy-5-deazariboflavin + 5'-deoxyadenosine + L-methionine + NH4(+) + H(+). It participates in cofactor biosynthesis; coenzyme F0 biosynthesis. Its function is as follows. Catalyzes the radical-mediated synthesis of 7,8-didemethyl-8-hydroxy-5-deazariboflavin from 5-amino-5-(4-hydroxybenzyl)-6-(D-ribitylimino)-5,6-dihydrouracil. The chain is 7,8-didemethyl-8-hydroxy-5-deazariboflavin synthase from Methanococcus vannielii (strain ATCC 35089 / DSM 1224 / JCM 13029 / OCM 148 / SB).